The sequence spans 224 residues: MKPQDLSPPFLWKERRPCIQDGVLYVPRHYFEHQNFSTSYHQEFFQNHTSIACELCSGNGDWVVAQAQKDPQVLWIAVEQRFDRVRKIWSKMINHQIQNLRIVCGTAETFFQYYVPDQFLQRLVVNFPDPWPKMRHRKHRLLQPSFVQEISRSLQDSAVFALATDDKTYLLESIEALQTHLAPRMETPYYIKMTDTYGNSWFENLWRTKGQEIFYTEFIKKAGI.

S-adenosyl-L-methionine contacts are provided by Glu54, Glu79, and Asp129. Asp129 is a catalytic residue. Positions 133 and 165 each coordinate substrate.

Belongs to the class I-like SAM-binding methyltransferase superfamily. TrmB family.

The enzyme catalyses guanosine(46) in tRNA + S-adenosyl-L-methionine = N(7)-methylguanosine(46) in tRNA + S-adenosyl-L-homocysteine. Its pathway is tRNA modification; N(7)-methylguanine-tRNA biosynthesis. Functionally, catalyzes the formation of N(7)-methylguanine at position 46 (m7G46) in tRNA. The protein is tRNA (guanine-N(7)-)-methyltransferase of Chlamydia pneumoniae (Chlamydophila pneumoniae).